Here is a 555-residue protein sequence, read N- to C-terminus: Neurofilament light polypeptide (555 aa).

Ser2 is modified (N-acetylserine). The tract at residues 2–93 is head; the sequence is SSFSYEPYYS…KSIRTQEKAQ (92 aa). Arg23 is modified (asymmetric dimethylarginine; alternate). Arg23 bears the Omega-N-methylarginine; alternate mark. Position 30 is an omega-N-methylarginine (Arg30). Tyr43 carries the phosphotyrosine modification. A phosphoserine mark is found at Ser56, Ser67, and Ser103. An IF rod domain is found at 90–401; the sequence is EKAQLQDLND…KLLEGEETRL (312 aa). Residues 94–125 form a coil 1A region; that stretch reads LQDLNDRFASFIERVHELEQQNKVLEAELLVL. The tract at residues 126–138 is linker 1; it reads RQKHSEPSRFRAL. Positions 139-234 are coil 1B; it reads YEQEIRDLRL…KVHEEEIAEL (96 aa). Positions 235–253 are linker 12; the sequence is QAQIQYAQISVEMDVSSKP. The coil 2A stretch occupies residues 254-272; the sequence is DLSAALKDIRAQYEKLAAK. Residues 273–281 are linker 2; that stretch reads NMQNAEEWF. The tract at residues 282–397 is coil 2B; it reads KSRFTVLTES…AAYRKLLEGE (116 aa). Residues 398–444 are tail, subdomain A; it reads ETRLSFTSVGSLTTGYTQSSQVFGRSAYGGLQTSSYLMSARSFPSYY. The tract at residues 398 to 555 is tail; sequence ETRLSFTSVG…GEEQATKKKD (158 aa). The tail, subdomain B (acidic) stretch occupies residues 445 to 555; sequence TSHVQEEQIE…GEEQATKKKD (111 aa). The disordered stretch occupies residues 463 to 555; that stretch reads KAEEAKDEPP…GEEQATKKKD (93 aa). The segment covering 472-540 has biased composition (acidic residues); it reads PSEGEAEEEE…ETKEAEEEEK (69 aa). Phosphoserine is present on Ser473. Phosphothreonine is present on Thr532. Over residues 541–555 the composition is skewed to basic and acidic residues; the sequence is KDEGAGEEQATKKKD.

It belongs to the intermediate filament family. Forms homodimers (in vitro). Forms heterodimers with NEFH or NEFM; which can further hetero-oligomerize (in vitro). Forms heterodimers with INA (in vitro). Interacts with ARHGEF28. Interacts with TRIM2. In terms of processing, O-glycosylated. Phosphorylated in the head and rod regions by the PKC kinase PKN1, leading to the inhibition of polymerization. Post-translationally, ubiquitinated in the presence of TRIM2 and UBE2D1.

It is found in the cell projection. The protein resides in the axon. Its subcellular location is the cytoplasm. The protein localises to the cytoskeleton. Neurofilaments usually contain three intermediate filament proteins: NEFL, NEFM, and NEFH which are involved in the maintenance of neuronal caliber. May additionally cooperate with the neuronal intermediate filament proteins PRPH and INA to form neuronal filamentous networks. The chain is Neurofilament light polypeptide (NEFL) from Bos taurus (Bovine).